A 70-amino-acid chain; its full sequence is DNA-directed RNA polymerase subunit epsilon (70 aa).

This sequence belongs to the RNA polymerase subunit epsilon family. RNAP is composed of a core of 2 alpha, a beta and a beta' subunit. The core is associated with a delta subunit, and at least one of epsilon or omega. When a sigma factor is associated with the core the holoenzyme is formed, which can initiate transcription.

The enzyme catalyses RNA(n) + a ribonucleoside 5'-triphosphate = RNA(n+1) + diphosphate. Functionally, a non-essential component of RNA polymerase (RNAP). The chain is DNA-directed RNA polymerase subunit epsilon from Lacticaseibacillus casei (strain BL23) (Lactobacillus casei).